Reading from the N-terminus, the 97-residue chain is UPF0729 protein AAEL015238 (97 aa).

Residues 69–97 (EVAASGSGSNGTATAVGSEGEAEETKKSQ) are disordered. Positions 74 to 83 (GSGSNGTATA) are enriched in polar residues.

Belongs to the UPF0729 family.

This is UPF0729 protein AAEL015238 from Aedes aegypti (Yellowfever mosquito).